The sequence spans 63 residues: Large ribosomal subunit protein bL35 (63 aa).

It belongs to the bacterial ribosomal protein bL35 family.

This is Large ribosomal subunit protein bL35 from Campylobacter hominis (strain ATCC BAA-381 / DSM 21671 / CCUG 45161 / LMG 19568 / NCTC 13146 / CH001A).